The sequence spans 418 residues: Tyrosine--tRNA ligase 1 (418 aa).

An L-tyrosine-binding site is contributed by Y34. The short motif at 39-48 (PTGDSMHIGH) is the 'HIGH' region element. Positions 166 and 170 each coordinate L-tyrosine. Positions 228–232 (KFGKT) match the 'KMSKS' region motif. Residue K231 coordinates ATP. Residues 350-416 (KNIVDWLVDT…GKKNYFLAKV (67 aa)) form the S4 RNA-binding domain.

It belongs to the class-I aminoacyl-tRNA synthetase family. TyrS type 1 subfamily. In terms of assembly, homodimer.

It is found in the cytoplasm. It catalyses the reaction tRNA(Tyr) + L-tyrosine + ATP = L-tyrosyl-tRNA(Tyr) + AMP + diphosphate + H(+). Its function is as follows. Catalyzes the attachment of tyrosine to tRNA(Tyr) in a two-step reaction: tyrosine is first activated by ATP to form Tyr-AMP and then transferred to the acceptor end of tRNA(Tyr). The protein is Tyrosine--tRNA ligase 1 of Enterococcus faecalis (strain ATCC 700802 / V583).